The primary structure comprises 423 residues: MVKALQGAAQNLPADVNQLIDQLERHCLAPDGSLVTKSVYSDLQLAREEMSRERLRYLEAMAIYCEAVAMVEEYQQAISVANHGGIRDVQGLYPQLGLKNSPQVYETLEHRLVVAEAAQKLRLPLISDGGEIHEEEIEKWSILSRSSLDSASTSFTISSTSNSVNYANSSANSVAGGISLSAVDTDVVGGVPNRFLGITPAYLSYVQLQNTISMDMADYQMFLAREIEGRLKEKCDKLADAIVDDTDSSTGNRNSSARLPERVKFIIEEIERDEAALREDLYSADRKFAEYYNVLEQILGVLIKLVKDLKLEHQHKYNEMQKTWLCKRCETMNAKLRVLENVLLLETYTPDSISALHNIRNYLVEATEEASAAYNKAVTRLREYQGVDPHFDTIARQYHDIVKKLENMQWTIHQVEMDLKSHD.

The stretch at 267–287 (IEEIERDEAALREDLYSADRK) forms a coiled coil.

The protein belongs to the HAUS4 family. In terms of assembly, part of the augmin complex composed of 8 subunits. The complex acts on microtubules and interacts with gamma-tubulin in spindles and the phragmoplast.

The protein localises to the cytoplasm. The protein resides in the cytoskeleton. Its subcellular location is the spindle. It localises to the phragmoplast. Functionally, involved in microtubules reorganization during spindle and phragmoplast development. The sequence is that of AUGMIN subunit 4 (AUG4) from Arabidopsis thaliana (Mouse-ear cress).